The chain runs to 1087 residues: Fanconi-associated nuclease 1 homolog (1087 aa).

Disordered stretches follow at residues 1-79 (MKSN…TPIK), 104-154 (FQKA…PNNL), 169-202 (EFLLSQPTTPPPSNTTTTTTTTSSSSPSSSNNIT), 459-486 (TQNSSGSSNNNNNNNNNNNNNNNNNNNI), 816-835 (ITSDDELFPPGQSYKIEKEN), and 842-871 (SVKKEEEQEEEEEEEEEGQGQEEEEEEEEI). The span at 41 to 79 (TTTPPKTPTQPIRFTQNNNKENDKSNNNNNNNNTITPIK) shows a compositional bias: low complexity. Residues 104-115 (FQKASTPSSPQI) show a composition bias toward polar residues. Composition is skewed to low complexity over residues 118 to 154 (KLPQQENQQQIPNTQQQQIKQLQQQQQQQQQESPNNL), 182 to 202 (NTTTTTTTTSSSSPSSSNNIT), and 467 to 485 (NNNNNNNNNNNNNNNNNNN). 2 coiled-coil regions span residues 419–490 (WKSK…KEYD) and 830–874 (KIEK…IIEI). The span at 848 to 871 (EQEEEEEEEEEGQGQEEEEEEEEI) shows a compositional bias: acidic residues. Glu-899, Asp-1023, Glu-1051, and Val-1052 together coordinate Mn(2+). One can recognise a VRR-NUC domain in the interval 961–1083 (DDLLILLNQS…GCDVEVCLVK (123 aa)).

This sequence belongs to the FAN1 family. Requires Mn(2+) as cofactor. It depends on Mg(2+) as a cofactor.

The catalysed reaction is Hydrolytically removes 5'-nucleotides successively from the 3'-hydroxy termini of 3'-hydroxy-terminated oligonucleotides.. Nuclease required for the repair of DNA interstrand cross-links (ICL). Acts as a 5'-3' exonuclease that anchors at a cut end of DNA and cleaves DNA successively at every third nucleotide, allowing to excise an ICL from one strand through flanking incisions. This is Fanconi-associated nuclease 1 homolog (mtmr15) from Dictyostelium discoideum (Social amoeba).